The following is a 730-amino-acid chain: Elongation factor 2 (730 aa).

Positions 19 to 229 (LMIRNIGIVA…GVSFSEVFNY (211 aa)) constitute a tr-type G domain. Residues 28–35 (AHIDHGKT), 94–98 (DTPGH), and 148–151 (NKVD) contribute to the GTP site. His596 is subject to Diphthamide.

The protein belongs to the TRAFAC class translation factor GTPase superfamily. Classic translation factor GTPase family. EF-G/EF-2 subfamily.

The protein resides in the cytoplasm. In terms of biological role, catalyzes the GTP-dependent ribosomal translocation step during translation elongation. During this step, the ribosome changes from the pre-translocational (PRE) to the post-translocational (POST) state as the newly formed A-site-bound peptidyl-tRNA and P-site-bound deacylated tRNA move to the P and E sites, respectively. Catalyzes the coordinated movement of the two tRNA molecules, the mRNA and conformational changes in the ribosome. The protein is Elongation factor 2 (fusA) of Methanococcoides burtonii (strain DSM 6242 / NBRC 107633 / OCM 468 / ACE-M).